Reading from the N-terminus, the 155-residue chain is Alanine- and arginine-rich domain-containing protein (155 aa).

The sequence is that of Alanine- and arginine-rich domain-containing protein (AARD) from Homo sapiens (Human).